Consider the following 237-residue polypeptide: MSLLHQARFFITVNHLRDLPATAVPEVAFAGRSNAGKSTAINILCNQKRLAFSSRTPGRTQHINYFSVAPVKAPDPLAFLVDLPGYGYAEVSGSAKYHWQGLLSDYVQTRQQLAGLILMMDARRPFTDLDCQMVEWFLPTGRPIHVLLTKADKLTNSENAKALRETRKMLQGYAEQLETPVPMTAQLFSSLKRRGIEEAQAVIAGWLNLPEARKAEREPAAANSVPPAVPPASDPAA.

In terms of domain architecture, EngB-type G spans 23-209 (AVPEVAFAGR…QAVIAGWLNL (187 aa)). GTP contacts are provided by residues 31–38 (GRSNAGKS), 58–62 (GRTQH), 82–85 (DLPG), 149–152 (TKAD), and 187–190 (LFSS). Residues S38 and T60 each contribute to the Mg(2+) site. The segment at 214–237 (KAEREPAAANSVPPAVPPASDPAA) is disordered. A compositionally biased stretch (pro residues) spans 227–237 (PAVPPASDPAA).

This sequence belongs to the TRAFAC class TrmE-Era-EngA-EngB-Septin-like GTPase superfamily. EngB GTPase family. Mg(2+) serves as cofactor.

Its function is as follows. Necessary for normal cell division and for the maintenance of normal septation. The chain is Probable GTP-binding protein EngB from Cupriavidus taiwanensis (strain DSM 17343 / BCRC 17206 / CCUG 44338 / CIP 107171 / LMG 19424 / R1) (Ralstonia taiwanensis (strain LMG 19424)).